A 393-amino-acid chain; its full sequence is Formate-dependent phosphoribosylglycinamide formyltransferase (393 aa).

Residues 20 to 21 (EL) and Glu80 each bind N(1)-(5-phospho-beta-D-ribosyl)glycinamide. Residues Arg112, Lys153, 158-163 (SSGKGQ), 193-196 (EAFI), and Glu201 contribute to the ATP site. The 190-residue stretch at 117–306 (RLAAEDLNLP…EFELHVRAVL (190 aa)) folds into the ATP-grasp domain. Residues Glu265 and Glu277 each coordinate Mg(2+). Residues Asp284, Lys354, and 361–362 (RR) contribute to the N(1)-(5-phospho-beta-D-ribosyl)glycinamide site.

It belongs to the PurK/PurT family. As to quaternary structure, homodimer.

It catalyses the reaction N(1)-(5-phospho-beta-D-ribosyl)glycinamide + formate + ATP = N(2)-formyl-N(1)-(5-phospho-beta-D-ribosyl)glycinamide + ADP + phosphate + H(+). The protein operates within purine metabolism; IMP biosynthesis via de novo pathway; N(2)-formyl-N(1)-(5-phospho-D-ribosyl)glycinamide from N(1)-(5-phospho-D-ribosyl)glycinamide (formate route): step 1/1. In terms of biological role, involved in the de novo purine biosynthesis. Catalyzes the transfer of formate to 5-phospho-ribosyl-glycinamide (GAR), producing 5-phospho-ribosyl-N-formylglycinamide (FGAR). Formate is provided by PurU via hydrolysis of 10-formyl-tetrahydrofolate. In Syntrophotalea carbinolica (strain DSM 2380 / NBRC 103641 / GraBd1) (Pelobacter carbinolicus), this protein is Formate-dependent phosphoribosylglycinamide formyltransferase.